Reading from the N-terminus, the 197-residue chain is Phosphoheptose isomerase (197 aa).

The 161-residue stretch at 37–197 (MLQCLMNDGK…CIDSVLLEGM (161 aa)) folds into the SIS domain. Residue 52-54 (NGG) coordinates substrate. Residues histidine 61 and glutamate 65 each coordinate Zn(2+). Residues glutamate 65, 94–95 (ND), 120–122 (STS), serine 125, and glutamine 175 each bind substrate. Positions 175 and 183 each coordinate Zn(2+).

The protein belongs to the SIS family. GmhA subfamily. Homotetramer. The cofactor is Zn(2+).

The protein resides in the cytoplasm. The enzyme catalyses 2 D-sedoheptulose 7-phosphate = D-glycero-alpha-D-manno-heptose 7-phosphate + D-glycero-beta-D-manno-heptose 7-phosphate. It participates in carbohydrate biosynthesis; D-glycero-D-manno-heptose 7-phosphate biosynthesis; D-glycero-alpha-D-manno-heptose 7-phosphate and D-glycero-beta-D-manno-heptose 7-phosphate from sedoheptulose 7-phosphate: step 1/1. Catalyzes the isomerization of sedoheptulose 7-phosphate in D-glycero-D-manno-heptose 7-phosphate. The polypeptide is Phosphoheptose isomerase (Neisseria meningitidis serogroup C / serotype 2a (strain ATCC 700532 / DSM 15464 / FAM18)).